Consider the following 30-residue polypeptide: Dermonecrotic toxin LlSicTox-alphaIII-1 (30 aa).

His-12 is an active-site residue.

It belongs to the arthropod phospholipase D family. Class I subfamily. The cofactor is Mg(2+). Contains 1 disulfide bond. As to expression, expressed by the venom gland.

The protein resides in the secreted. It catalyses the reaction an N-(acyl)-sphingosylphosphocholine = an N-(acyl)-sphingosyl-1,3-cyclic phosphate + choline. The catalysed reaction is an N-(acyl)-sphingosylphosphoethanolamine = an N-(acyl)-sphingosyl-1,3-cyclic phosphate + ethanolamine. It carries out the reaction a 1-acyl-sn-glycero-3-phosphocholine = a 1-acyl-sn-glycero-2,3-cyclic phosphate + choline. The enzyme catalyses a 1-acyl-sn-glycero-3-phosphoethanolamine = a 1-acyl-sn-glycero-2,3-cyclic phosphate + ethanolamine. Functionally, dermonecrotic toxins cleave the phosphodiester linkage between the phosphate and headgroup of certain phospholipids (sphingolipid and lysolipid substrates), forming an alcohol (often choline) and a cyclic phosphate. This toxin acts on sphingomyelin (SM). It may also act on ceramide phosphoethanolamine (CPE), lysophosphatidylcholine (LPC) and lysophosphatidylethanolamine (LPE), but not on lysophosphatidylserine (LPS), and lysophosphatidylglycerol (LPG). It acts by transphosphatidylation, releasing exclusively cyclic phosphate products as second products. In vivo, intradermal injection induces dermonecrosis. Induces hemolysis, increased vascular permeability, edema, inflammatory response, and platelet aggregation. The protein is Dermonecrotic toxin LlSicTox-alphaIII-1 of Loxosceles laeta (South American recluse spider).